We begin with the raw amino-acid sequence, 292 residues long: Peroxisomal 2,4-dienoyl-CoA reductase [(3E)-enoyl-CoA-producing] (292 aa).

Ala2 is subject to N-acetylalanine. NADP(+)-binding positions include 35–40 (GGGSGI), 60–64 (RSLPR), and Asp86. Arg60 is a binding site for substrate. Substrate contacts are provided by residues Arg88, Phe118, and 126–128 (SFN). Lys151 is subject to N6-acetyllysine. NADP(+) is bound by residues Lys182 and 208–214 (PGPISGT). Residue Arg219 participates in substrate binding. Ser287 carries the post-translational modification Phosphoserine. A Microbody targeting signal motif is present at residues 290–292 (AKL). Residue Lys291 is modified to N6-acetyllysine.

Belongs to the short-chain dehydrogenases/reductases (SDR) family. 2,4-dienoyl-CoA reductase subfamily. In terms of assembly, monomer, dimer and oligomer.

Its subcellular location is the peroxisome. It catalyses the reaction a (2E,4Z)-dienoyl-CoA + NADPH + H(+) = a 4,5-saturated-(3E)-enoyl-CoA + NADP(+). The catalysed reaction is a (2E,4E)-dienoyl-CoA + NADPH + H(+) = a 4,5-saturated-(3E)-enoyl-CoA + NADP(+). It carries out the reaction (2E,4E)-hexadienoyl-CoA + NADPH + H(+) = (3E)-hexenoyl-CoA + NADP(+). The enzyme catalyses (2E,4E)-decadienoyl-CoA + NADPH + H(+) = (3E)-decenoyl-CoA + NADP(+). It catalyses the reaction (2E,4Z,7Z,10Z,13Z,16Z,19Z)-docosaheptaenoyl-CoA + NADPH + H(+) = (3E,7Z,10Z,13Z,16Z,19Z)-docosahexaenoyl-CoA + NADP(+). In terms of biological role, auxiliary enzyme of beta-oxidation. Participates in the degradation of unsaturated fatty enoyl-CoA esters having double bonds in both even- and odd-numbered positions in peroxisome. Catalyzes the NADP-dependent reduction of 2,4-dienoyl-CoA to yield trans-3-enoyl-CoA. Has activity towards short and medium chain 2,4-dienoyl-CoAs, but also towards 2,4,7,10,13,16,19-docosaheptaenoyl-CoA, suggesting that it does not constitute a rate limiting step in the peroxisomal degradation of docosahexaenoic acid. This Pongo abelii (Sumatran orangutan) protein is Peroxisomal 2,4-dienoyl-CoA reductase [(3E)-enoyl-CoA-producing] (DECR2).